We begin with the raw amino-acid sequence, 155 residues long: Small ribosomal subunit protein uS9 (155 aa).

This sequence belongs to the universal ribosomal protein uS9 family.

The chain is Small ribosomal subunit protein uS9 from Rhizobium etli (strain CIAT 652).